Here is a 376-residue protein sequence, read N- to C-terminus: Succinyl-diaminopimelate desuccinylase (376 aa).

Histidine 67 contributes to the Zn(2+) binding site. Aspartate 69 is an active-site residue. Aspartate 100 is a Zn(2+) binding site. The active-site Proton acceptor is glutamate 134. Zn(2+) contacts are provided by glutamate 135, glutamate 163, and histidine 349.

The protein belongs to the peptidase M20A family. DapE subfamily. As to quaternary structure, homodimer. Requires Zn(2+) as cofactor. Co(2+) serves as cofactor.

It carries out the reaction N-succinyl-(2S,6S)-2,6-diaminopimelate + H2O = (2S,6S)-2,6-diaminopimelate + succinate. Its pathway is amino-acid biosynthesis; L-lysine biosynthesis via DAP pathway; LL-2,6-diaminopimelate from (S)-tetrahydrodipicolinate (succinylase route): step 3/3. Functionally, catalyzes the hydrolysis of N-succinyl-L,L-diaminopimelic acid (SDAP), forming succinate and LL-2,6-diaminopimelate (DAP), an intermediate involved in the bacterial biosynthesis of lysine and meso-diaminopimelic acid, an essential component of bacterial cell walls. The sequence is that of Succinyl-diaminopimelate desuccinylase from Shewanella sediminis (strain HAW-EB3).